Here is a 131-residue protein sequence, read N- to C-terminus: Sirohydrochlorin cobaltochelatase (131 aa).

Histidine 12 functions as the Proton acceptor in the catalytic mechanism. Histidine 12 and histidine 78 together coordinate Co(2+). Ni(2+)-binding residues include histidine 12 and histidine 78. 73-78 is a substrate binding site; the sequence is LASGVH.

The protein belongs to the CbiX family. CbiXS subfamily. As to quaternary structure, homotetramer; dimer of dimers.

The catalysed reaction is Co-sirohydrochlorin + 2 H(+) = sirohydrochlorin + Co(2+). It carries out the reaction Ni-sirohydrochlorin + 2 H(+) = sirohydrochlorin + Ni(2+). It participates in cofactor biosynthesis; adenosylcobalamin biosynthesis; cob(II)yrinate a,c-diamide from sirohydrochlorin (anaerobic route): step 1/10. Catalyzes the insertion of Co(2+) into sirohydrochlorin as part of the anaerobic pathway to cobalamin biosynthesis. Involved in the biosynthesis of the unique nickel-containing tetrapyrrole coenzyme F430, the prosthetic group of methyl-coenzyme M reductase (MCR), which plays a key role in methanogenesis and anaerobic methane oxidation. Catalyzes the insertion of Ni(2+) into sirohydrochlorin to yield Ni-sirohydrochlorin. The protein is Sirohydrochlorin cobaltochelatase of Methanococcoides burtonii (strain DSM 6242 / NBRC 107633 / OCM 468 / ACE-M).